A 638-amino-acid polypeptide reads, in one-letter code: MVAITLPDGKVRQFDHPVTGLDVAKDIGPGLAKAALAITIDGEMKDLATLIDRDVNLSIITAKSGQDALELLRHDAAHVMAEAVKELYPETQVTIGPSIENGFYYDFARPTPFTPDDLAKIEARMAEIVDRDEAITREEWDRDAAVKFFEDAGEKYKAEIIASIPADQKIGLYRQGNFIDLCRGPHLPSTAKLGKAFKLMKLAGAYWRGDSRNEMLQRIYGTAWFDKKELDAYLHMLEEAEKRDHRRLGREMELFHQQEEAAGSVFWHKKGWTLYRAVESYMRRRLEANNYEEVKTPQLVDFSLWEASGHADKFSESMFTIKTQDERHLAVKPMNCPCHVQIFRQGIKSYRDLPLRMAEFGSCHRYEPSGALHGIMRVRAFTQDDAHIFCTEDQITSETIAFCQLLKEVYTDFGFTDVRVKFSDRPAKRAGSDETWDKAESALLEASKAAGLETVLNPGEGAFYGPKLEFVLRDAIGRDWQCGTLQVDFVLPERLDAAYVAEDGAKKRPVMLHRAILGSFERFLGILIENFAGRFPLWLAPTQVVVATIVSEADDFAREVEATLKAAGLRVELDLRNEKINYKVREHSVAKVPVMLVVGKREAESRQVAIRRLGSQNQEIVALDQAVATLAAEATPPA.

Positions 1–61 (MVAITLPDGK…DRDVNLSIIT (61 aa)) constitute a TGS domain. Positions 244–536 (DHRRLGREME…LIENFAGRFP (293 aa)) are catalytic. The Zn(2+) site is built by Cys336, His387, and His513.

It belongs to the class-II aminoacyl-tRNA synthetase family. As to quaternary structure, homodimer. The cofactor is Zn(2+).

Its subcellular location is the cytoplasm. The enzyme catalyses tRNA(Thr) + L-threonine + ATP = L-threonyl-tRNA(Thr) + AMP + diphosphate + H(+). In terms of biological role, catalyzes the attachment of threonine to tRNA(Thr) in a two-step reaction: L-threonine is first activated by ATP to form Thr-AMP and then transferred to the acceptor end of tRNA(Thr). Also edits incorrectly charged L-seryl-tRNA(Thr). In Paramagnetospirillum magneticum (strain ATCC 700264 / AMB-1) (Magnetospirillum magneticum), this protein is Threonine--tRNA ligase.